A 986-amino-acid polypeptide reads, in one-letter code: Ankyrin repeat, PH and SEC7 domain containing protein secG (986 aa).

A compositionally biased stretch (low complexity) spans 1–28 (MGSTSNSTKNTGSTTTTTTTAAPATTAK). Residues 1-43 (MGSTSNSTKNTGSTTTTTTTAAPATTAKHSNSAPTRPSVHYYS) form a disordered region. Polar residues predominate over residues 29–43 (HSNSAPTRPSVHYYS). 15 ANK repeats span residues 34–63 (PTRPSVHYYSSTGDIEKLSNLLNNSATSPD), 68–97 (EKRTPLHHAAFCGSAACVNFLLDKKANANI), 101–131 (AGNTPLQWASSRGHLECIKLLVEKGGVDVNT), 135–164 (KNGTPLHKASLFASAECVLYLLNGKADPRA), 168–197 (NGETPLHHASAGGNPQCVELLIKADSKVNA), 201–230 (DCITPLHQASFSGHSSCVSLLLKKGAKVDP), 234–263 (HGISPLHNAASAGYVDCVEQLVRNGENINC), 267–296 (EGVTPLHHTCFNGNLQLTKRLIELGAKINM), 300–329 (MGETPLHKAAFNGHKEVCEYLLYLDPTMID), 334–363 (RQSTSLHLAAFNGLLDMVDLLIRYKAQINI), 367–396 (EGATPLHKASFNGHSSCAKLLVDKGAPICI), 400–429 (QGATPLHKAAFNGRSKCLATLIRSGAELEV), 433–462 (QGGTPLHNAAYNGHSDCCRILLKKGANVNA), 466–495 (HSSTPLHLASAAGARDTVDVLIQFKARIDA), and 499–528 (AGKTPLVYAIKKNHSDVARVLIRAGADLDQ). The region spanning 580 to 770 (QLAAEKQKLL…ENLYDKIVTN (191 aa)) is the SEC7 domain. Positions 784 to 895 (HVEKKGWLTK…WVQSIKSNIH (112 aa)) constitute a PH domain. Residues 911–986 (IRGRGKVSTK…PVQQQTSALS (76 aa)) are disordered. Residues 920-929 (KPIQNRKQTI) are compositionally biased toward polar residues. 2 stretches are compositionally biased toward low complexity: residues 936–953 (TTTTTTSTASNNVTSVGS) and 963–986 (SSGSKPVTFSSTSSPVQQQTSALS).

The polypeptide is Ankyrin repeat, PH and SEC7 domain containing protein secG (secG) (Dictyostelium discoideum (Social amoeba)).